The primary structure comprises 66 residues: Large ribosomal subunit protein bL33c (66 aa).

The protein belongs to the bacterial ribosomal protein bL33 family.

The protein resides in the plastid. The protein localises to the chloroplast. This is Large ribosomal subunit protein bL33c from Nicotiana sylvestris (Wood tobacco).